A 249-amino-acid polypeptide reads, in one-letter code: Tumor necrosis factor ligand superfamily member 12 (249 aa).

Residues 1 to 21 (MAARRSQRRRGRRGEPGTALL) are Cytoplasmic-facing. A helical; Signal-anchor for type II membrane protein membrane pass occupies residues 22–42 (VPLALGLGLALACLGLLLAVV). At 43–249 (SLGSRASLSA…LTYFGLFQVH (207 aa)) the chain is on the extracellular side. The segment at 55-85 (PAQEELVAEEDQDPSELNPQTEESQDPAPFL) is disordered. A compositionally biased stretch (acidic residues) spans 56–68 (AQEELVAEEDQDP). One can recognise a THD domain in the interval 107–248 (IAAHYEVHPR…FLTYFGLFQV (142 aa)). Residue Asn-139 is glycosylated (N-linked (GlcNAc...) asparagine). The cysteines at positions 191 and 210 are disulfide-linked.

Belongs to the tumor necrosis factor family. As to quaternary structure, homotrimer. Interacts with the angiogenic factor AGGF1/VG5Q. In terms of processing, the soluble form derives from the membrane form by proteolytic processing. As to expression, highly expressed in adult heart, pancreas, skeletal muscle, brain, colon, small intestine, lung, ovary, prostate, spleen, lymph node, appendix and peripheral blood lymphocytes. Low expression in kidney, testis, liver, placenta, thymus and bone marrow. Also detected in fetal kidney, liver, lung and brain.

Its subcellular location is the cell membrane. The protein localises to the secreted. Its function is as follows. Binds to FN14 and possibly also to TNRFSF12/APO3. Weak inducer of apoptosis in some cell types. Mediates NF-kappa-B activation. Promotes angiogenesis and the proliferation of endothelial cells. Also involved in induction of inflammatory cytokines. Promotes IL8 secretion. The polypeptide is Tumor necrosis factor ligand superfamily member 12 (TNFSF12) (Homo sapiens (Human)).